A 487-amino-acid polypeptide reads, in one-letter code: Protein nucleotidyltransferase YdiU (487 aa).

8 residues coordinate ATP: glycine 90, glycine 92, arginine 93, lysine 113, aspartate 125, glycine 126, arginine 176, and arginine 183. Aspartate 252 functions as the Proton acceptor in the catalytic mechanism. Mg(2+) is bound by residues asparagine 253 and aspartate 262. Aspartate 262 provides a ligand contact to ATP.

This sequence belongs to the SELO family. It depends on Mg(2+) as a cofactor. The cofactor is Mn(2+).

The catalysed reaction is L-seryl-[protein] + ATP = 3-O-(5'-adenylyl)-L-seryl-[protein] + diphosphate. It carries out the reaction L-threonyl-[protein] + ATP = 3-O-(5'-adenylyl)-L-threonyl-[protein] + diphosphate. The enzyme catalyses L-tyrosyl-[protein] + ATP = O-(5'-adenylyl)-L-tyrosyl-[protein] + diphosphate. It catalyses the reaction L-histidyl-[protein] + UTP = N(tele)-(5'-uridylyl)-L-histidyl-[protein] + diphosphate. The catalysed reaction is L-seryl-[protein] + UTP = O-(5'-uridylyl)-L-seryl-[protein] + diphosphate. It carries out the reaction L-tyrosyl-[protein] + UTP = O-(5'-uridylyl)-L-tyrosyl-[protein] + diphosphate. Functionally, nucleotidyltransferase involved in the post-translational modification of proteins. It can catalyze the addition of adenosine monophosphate (AMP) or uridine monophosphate (UMP) to a protein, resulting in modifications known as AMPylation and UMPylation. The polypeptide is Protein nucleotidyltransferase YdiU (Pseudomonas fluorescens (strain Pf0-1)).